The chain runs to 300 residues: Protoheme IX farnesyltransferase 1 (300 aa).

The next 9 helical transmembrane spans lie at 28 to 48 (VVALMLLTVLVGMCLAMPTIL), 54 to 74 (VAGLLGIAMMAGSAAALNHLI), 100 to 120 (ALLFAALLGSLGFVILYVFTN), 122 to 142 (LTAWLTFASLIGYALIYTAYL), 149 to 169 (NIVIGGLAGAMPPLLGWTAVT), 176 to 196 (ALLLVIIIFLWTPPHFWALAI), 222 to 242 (CILLYTILLAIACLLPVLVGM), 243 to 263 (SGPLYFVCSSLLSTGFIYKAW), and 280 to 300 (FSIYHLMLLFMALLLDHYLWA).

This sequence belongs to the UbiA prenyltransferase family. Protoheme IX farnesyltransferase subfamily.

The protein resides in the cell inner membrane. The enzyme catalyses heme b + (2E,6E)-farnesyl diphosphate + H2O = Fe(II)-heme o + diphosphate. It participates in porphyrin-containing compound metabolism; heme O biosynthesis; heme O from protoheme: step 1/1. In terms of biological role, converts heme B (protoheme IX) to heme O by substitution of the vinyl group on carbon 2 of heme B porphyrin ring with a hydroxyethyl farnesyl side group. This Shewanella sp. (strain MR-4) protein is Protoheme IX farnesyltransferase 1.